A 428-amino-acid chain; its full sequence is UPF0761 membrane protein TERTU_3006 (428 aa).

The next 7 membrane-spanning stretches (helical) occupy residues 47–67 (LFAL…IPAF), 104–124 (LSGV…RNIE), 143–163 (YLLY…AFLL), 189–209 (VVPW…VPNC), 218–238 (IGGV…GYIV), 248–268 (GAFA…TIIL), and 292–312 (MIVV…GESV).

Belongs to the UPF0761 family.

It localises to the cell inner membrane. The protein is UPF0761 membrane protein TERTU_3006 of Teredinibacter turnerae (strain ATCC 39867 / T7901).